Consider the following 1544-residue polypeptide: Rho guanine nucleotide exchange factor 12 (1544 aa).

The disordered stretch occupies residues 1–62; that stretch reads MSGTQSTITD…KTKSSSEESR (62 aa). The residue at position 2 (serine 2) is an N-acetylserine. Basic and acidic residues predominate over residues 28–45; the sequence is SPTDKKQKVERIASHDFD. The residue at position 41 (serine 41) is a Phosphoserine. The PDZ domain maps to 72-151; sequence CVIIQKDDNG…LTVQGRPPGS (80 aa). Positions 194-262 form a coiled coil; it reads MGEENNVVHN…LSKATGSAQD (69 aa). Residues 247 to 346 are disordered; that stretch reads PQLQEQLSKA…SLVGSPSTRI (100 aa). Polar residues-rich tracts occupy residues 249–260 and 293–309; these read LQEQLSKATGSA and DCSSGDASRPSSDNADS. A Phosphoserine modification is found at serine 309. Positions 313-329 are enriched in basic and acidic residues; sequence GPKERIYLEENPEKSET. The segment covering 330–344 has biased composition (polar residues); the sequence is IQDTDTQSLVGSPST. Serine 341 bears the Phosphoserine mark. Residues 367 to 558 form the RGSL domain; it reads GQCSCFQSIE…LMYMKHLGVK (192 aa). The interval 570 to 706 is disordered; the sequence is GRIGFLPKIK…GDTLDGTPRT (137 aa). Positions 582–592 are enriched in basic and acidic residues; it reads MKKDKEGEEKG. Positions 631–640 are enriched in polar residues; sequence STPSSVSPEP. At serine 637 the chain carries Phosphoserine. Residues 663–676 show a composition bias toward low complexity; that stretch reads ANSMSSVASGASFS. Residue threonine 736 is modified to Phosphothreonine. The region spanning 787–977 is the DH domain; it reads KRQEVINELF…RQILNYVNQA (191 aa). Residues 1019–1132 enclose the PH domain; it reads KMIHEGPLVW…WQDLICRMAA (114 aa). Residues 1138 to 1149 show a composition bias toward polar residues; it reads STKPIPLPQSTP. The tract at residues 1138 to 1179 is disordered; that stretch reads STKPIPLPQSTPGEGDNDEEDPSKLKEEQHGISVTGLQSPDR. 5 positions are modified to phosphoserine: serine 1288, serine 1327, serine 1377, serine 1457, and serine 1541.

In terms of assembly, interacts with GNA12 and GNA13, probably through the RGS-like domain. Interacts with RHOA, PLXNB1 and PLXNB2. Interacts through its PDZ domain with IGF1R beta subunit. Interacts with GCSAM. Found in a complex with ARHGEF11 and ARHGEF12; binding to ARHGEF11 and ARHGEF12 enhances CDC42 GEF activity of PLEKHG4B, and PLEKHG4B, in turn, inhibits ARHGEF11- and ARHGEF12-mediated RHOA activation. In terms of tissue distribution, ubiquitously expressed. Isoform 2 is found in jejunum and testis.

It is found in the cytoplasm. The protein localises to the membrane. In terms of biological role, may play a role in the regulation of RhoA GTPase by guanine nucleotide-binding alpha-12 (GNA12) and alpha-13 (GNA13). Acts as guanine nucleotide exchange factor (GEF) for RhoA GTPase and may act as GTPase-activating protein (GAP) for GNA12 and GNA13. This Homo sapiens (Human) protein is Rho guanine nucleotide exchange factor 12 (ARHGEF12).